The primary structure comprises 283 residues: tRNA-cytidine(32) 2-sulfurtransferase (283 aa).

A PP-loop motif motif is present at residues 49 to 54 (SGGKDS). Positions 124, 127, and 215 each coordinate [4Fe-4S] cluster.

It belongs to the TtcA family. Homodimer. Mg(2+) serves as cofactor. Requires [4Fe-4S] cluster as cofactor.

It localises to the cytoplasm. It carries out the reaction cytidine(32) in tRNA + S-sulfanyl-L-cysteinyl-[cysteine desulfurase] + AH2 + ATP = 2-thiocytidine(32) in tRNA + L-cysteinyl-[cysteine desulfurase] + A + AMP + diphosphate + H(+). It participates in tRNA modification. Its function is as follows. Catalyzes the ATP-dependent 2-thiolation of cytidine in position 32 of tRNA, to form 2-thiocytidine (s(2)C32). The sulfur atoms are provided by the cysteine/cysteine desulfurase (IscS) system. The protein is tRNA-cytidine(32) 2-sulfurtransferase of Acaryochloris marina (strain MBIC 11017).